Here is a 187-residue protein sequence, read N- to C-terminus: UPF0301 protein GOX1459 (187 aa).

Belongs to the UPF0301 (AlgH) family.

The chain is UPF0301 protein GOX1459 from Gluconobacter oxydans (strain 621H) (Gluconobacter suboxydans).